A 360-amino-acid chain; its full sequence is Terpene synthase 5 (360 aa).

Positions 87–92 match the DDxx(x)D/E motif motif; sequence DDFLER. The NDxxSxxxD/E motif motif lies at 237–245; sequence NDCVSYAKE.

This sequence belongs to the terpene synthase family.

Its function is as follows. Terpene synthase that converts its substrate farnesyl diphosphate (FPP) into 2 yet unidentified sesquiterpenes. The sequence is that of Terpene synthase 5 from Dictyostelium purpureum (Slime mold).